We begin with the raw amino-acid sequence, 86 residues long: Small ribosomal subunit protein uS17 (86 aa).

Belongs to the universal ribosomal protein uS17 family. As to quaternary structure, part of the 30S ribosomal subunit.

Its function is as follows. One of the primary rRNA binding proteins, it binds specifically to the 5'-end of 16S ribosomal RNA. The polypeptide is Small ribosomal subunit protein uS17 (Lactococcus lactis subsp. cremoris (strain MG1363)).